Reading from the N-terminus, the 192-residue chain is Thiosulfate reductase electron transfer subunit PhsB (192 aa).

4Fe-4S ferredoxin-type domains lie at 8–36 (YVML…VPEG), 55–86 (THFQ…RDEN), and 87–116 (GIVQ…LNPQ). [4Fe-4S] cluster contacts are provided by C17, C20, C23, C27, C64, C67, C72, C76, C96, C99, C102, C106, C123, C126, C139, and C143.

As to quaternary structure, composed of three subunits: PhsA, PhsB and PhsC. [4Fe-4S] cluster is required as a cofactor.

Its subcellular location is the cell inner membrane. Functionally, component of the PhsABC thiosulfate reductase that catalyzes the reduction of thiosulfate to sulfite and hydrogen sulfide, with menaquinol as the sole electron donor. Proton motive force (PMF) is required to drive transmembrane electron transfer within the reductase. The PhsB subunit transfers electrons between PhsC and PhsA. This is Thiosulfate reductase electron transfer subunit PhsB (phsB) from Salmonella typhi.